The chain runs to 111 residues: Large ribosomal subunit protein uL24 (111 aa).

This sequence belongs to the universal ribosomal protein uL24 family. In terms of assembly, part of the 50S ribosomal subunit.

Its function is as follows. One of two assembly initiator proteins, it binds directly to the 5'-end of the 23S rRNA, where it nucleates assembly of the 50S subunit. In terms of biological role, one of the proteins that surrounds the polypeptide exit tunnel on the outside of the subunit. This is Large ribosomal subunit protein uL24 from Bifidobacterium animalis subsp. lactis (strain AD011).